The chain runs to 613 residues: Immunoglobulin superfamily member 8 (613 aa).

The signal sequence occupies residues 1–27 (MGALRPTLLPPSLPLLLLLMLGMGCWA). 4 consecutive Ig-like C2-type domains span residues 28-149 (REVL…LRVL), 162-286 (PRGR…WAQI), 303-424 (SQLA…EAAS), and 431-560 (PVHV…WYQA). The Extracellular segment spans residues 28-579 (REVLVPEGPL…VYPYMHALDT (552 aa)). A disulfide bridge connects residues C49 and C127. N-linked (GlcNAc...) asparagine glycosylation is present at N50. Positions 155 to 174 (VSAAPPGPRGRQAPTSPPRM) are disordered. Cysteines 186 and 270 form a disulfide. Residues 274–276 (EWI) carry the EWI motif motif. 2 disulfide bridges follow: C326–C406 and C462–C544. N-linked (GlcNAc...) asparagine glycans are attached at residues N327 and N463. S518 bears the Phosphoserine mark. The helical transmembrane segment at 580 to 600 (LFVPLLVGTGVALVTGATVLG) threads the bilayer. Topologically, residues 601-613 (TITCCFMKRLRKR) are cytoplasmic. 2 S-palmitoyl cysteine lipidation sites follow: C604 and C605.

Interacts directly with CD82, CD81/tetraspanin-28 and CD9/tetraspanin-29. Also interacts with integrin alpha-3/beta-1 and integrin alpha-4/beta-1. Interacts with HSPA8; this interaction modulates migratory and antigen-presenting capacities of dendritic cells. In terms of tissue distribution, expressed in brain, kidney, testis, liver and placenta with moderate expression in all other tissues. Detected on a majority of B-cells, T-cells, and natural killer cells. Expressed on dendritic cells.

It localises to the cell membrane. Functionally, member of the immunoglobulin superfamily (IgSF) that links tetraspanin-enriched microdomains to the actin cytoskeleton and plays several important roles in innate and adaptive immunity. Acts as an inducible receptor of HSPA8 on dendritic cells to enhance the CCL21/SLC-dependent migration of activated mature dendritic cells while attenuating their antigen-specific stimulatory capacities. In complex with alpha-actinins ACTN1 and ACTN4, regulates actin dynamics in the immune synapse and subsequent T-cell activation. Inhibits the entry of several viruses such as hepatitis C Virus (HCV) or HIV-1. Mechanistically, promotes a change in CD81 organization at the plasma membrane by significantly restricting its diffusion which in turn influences CD81 interaction with Claudin-1/CLDN1, preventing CLDN1 from acting as a co-receptor required for HCV entry. Accumulates at the presynaptic terminal, the producer cell side of the virological synapse, to prevent HIV-1 Env-mediated cell-cell fusion. Highly expressed on malignant cells with antigen presentation defects, interacts with NK receptor KIR3DL2 to suppress NK-cell cytotoxicity. May participate in the regulation of neurite outgrowth and maintenance of the neural network in the adult brain. This Homo sapiens (Human) protein is Immunoglobulin superfamily member 8 (IGSF8).